Consider the following 252-residue polypeptide: UPF0246 protein FP0718 (252 aa).

It belongs to the UPF0246 family.

The polypeptide is UPF0246 protein FP0718 (Flavobacterium psychrophilum (strain ATCC 49511 / DSM 21280 / CIP 103535 / JIP02/86)).